A 123-amino-acid chain; its full sequence is Ribosome-binding factor A (123 aa).

The protein belongs to the RbfA family. In terms of assembly, monomer. Binds 30S ribosomal subunits, but not 50S ribosomal subunits or 70S ribosomes.

The protein localises to the cytoplasm. In terms of biological role, one of several proteins that assist in the late maturation steps of the functional core of the 30S ribosomal subunit. Associates with free 30S ribosomal subunits (but not with 30S subunits that are part of 70S ribosomes or polysomes). Required for efficient processing of 16S rRNA. May interact with the 5'-terminal helix region of 16S rRNA. This Lactobacillus johnsonii (strain CNCM I-12250 / La1 / NCC 533) protein is Ribosome-binding factor A.